A 241-amino-acid chain; its full sequence is Endodeoxyribonuclease NucC (241 aa).

Active-site residues include Asp-73, Glu-104, and Lys-106. Mg(2+) contacts are provided by Asp-73 and Glu-104.

Belongs to the NucC endonuclease family. As to quaternary structure, self-oligomerizes. Forms homotrimers; in the presence of cAAA the trimers associate face-to-face to form homohexamers. The 2 cAAA-binding sites are on the exterior of the hexamer at the three-way junction, there are maximally 2 cyclic nucleotides per hexamer. Mg(2+) serves as cofactor.

Its activity is regulated as follows. Activated by cAAA and to a lesser extent cAA; both cyclic nucleotides are products of its cognate CD-NTase. Cyclic nucleotide binding causes hexamerization. Functionally, effector DNase of a CBASS antivirus system. CBASS (cyclic oligonucleotide-based antiphage signaling system) provides immunity against bacteriophage. The CD-NTase protein synthesizes cyclic nucleotides in response to infection; these serve as specific second messenger signals. The signals activate a diverse range of effectors, leading to bacterial cell death and thus abortive phage infection. A type III-C(AAA) CBASS system. Its function is as follows. A cyclic nucleotide-activated dsDNase. In the presence of 3',3',3'-cyclic AMP-AMP-AMP (cAAA) and to a lesser extent cyclic-di-AMP (c-di-AMP), endonucleolytically degrades dsDNA. Binds one cAAA in a pocket on one surface of the trimer; cAAA binding promotes hexamerization which is probably necessary for nuclease activation. The nuclease digests dsDNA to about 50 bp lengths. DNA has been modeled to contact a pair of juxtaposed active sites (one from each layer of the hexamer), accounting for cleavage on both strands. This chain is Endodeoxyribonuclease NucC, found in Pseudomonas aeruginosa.